The sequence spans 341 residues: HTH-type transcriptional repressor PurR (341 aa).

The 55-residue stretch at 2–56 (ATIKDVAKRANVSTTTVSHVINKTRFVAEETRNAVWAAIKELHYSPSAVARSLKV) folds into the HTH lacI-type domain. The segment at residues 4–23 (IKDVAKRANVSTTTVSHVIN) is a DNA-binding region (H-T-H motif). Residues 48–56 (SAVARSLKV) mediate DNA binding. Positions 73, 190, 192, 221, and 275 each coordinate hypoxanthine.

As to quaternary structure, homodimer.

It functions in the pathway purine metabolism; purine nucleotide biosynthesis [regulation]. Is the main repressor of the genes involved in the de novo synthesis of purine nucleotides, regulating purB, purC, purEK, purF, purHD, purL, purMN and guaBA expression. PurR is allosterically activated to bind its cognate DNA by binding the purine corepressors, hypoxanthine or guanine, thereby effecting transcription repression. This chain is HTH-type transcriptional repressor PurR, found in Salmonella typhimurium (strain LT2 / SGSC1412 / ATCC 700720).